The sequence spans 518 residues: 2-isopropylmalate synthase (518 aa).

In terms of domain architecture, Pyruvate carboxyltransferase spans 5–267 (VIIFDTTLRD…STKIKHKEIY (263 aa)). Residues Asp-14, His-202, His-204, and Asn-238 each coordinate Mn(2+). The segment at 392–518 (SLSFFSVQSI…KLKKLKKINN (127 aa)) is regulatory domain.

The protein belongs to the alpha-IPM synthase/homocitrate synthase family. LeuA type 1 subfamily. As to quaternary structure, homodimer. Mn(2+) serves as cofactor.

Its subcellular location is the cytoplasm. It catalyses the reaction 3-methyl-2-oxobutanoate + acetyl-CoA + H2O = (2S)-2-isopropylmalate + CoA + H(+). It functions in the pathway amino-acid biosynthesis; L-leucine biosynthesis; L-leucine from 3-methyl-2-oxobutanoate: step 1/4. Catalyzes the condensation of the acetyl group of acetyl-CoA with 3-methyl-2-oxobutanoate (2-ketoisovalerate) to form 3-carboxy-3-hydroxy-4-methylpentanoate (2-isopropylmalate). The chain is 2-isopropylmalate synthase from Buchnera aphidicola subsp. Rhopalosiphum padi.